The chain runs to 595 residues: MPINILSQETVNKIAAGEVVERPLNAVKELVENSLDAFASSITVEIEEAGKKLIRVSDNGFGMDKKDLELSILRHATSKIDDFKDLMHIHSLGFRGEALASIAAVSNFAIKTRKKGENSGWKLSVAGAKDIKVMPWSGAEGTITEVKSLFFNTPARQKFLKSDSTERSRIINSLEETALANYDISFKIFSENKTVFSAAQTDSKTERIADILGKDFAKTLKNIKIDHPKISLDVYFTGRDNSLPNKKYQYLFVNSRPVNYPKRLMHCVYQSYKESIPRDKYPGILIYTDVDPSEIDVNIHPAKREVKFADENGIYDILFKALRNALMSQGHPEIKITYPPLDKEKSAKQEVEGSTAPRFPKIQQPVIYAREPKPKYNYASLKQTCSIDKYADVFAKQEELTPENFDSNIKVIGQVFDTYIIASNKGDLYIFDQHAAAERVRYEFYLSQMKSQTIKIQQMLMPENFDLSPSISELLKANINIFNELGISIEEFGQNSFRITAYPALLGNISMEQIVKTIISDIEDDKHAEIEQKRDKIIRSACRASIKAGDNVSFIEAKKLINDLFKCKQPFTCPHGRPTAYKISLNEIEKFFKRK.

The protein belongs to the DNA mismatch repair MutL/HexB family.

In terms of biological role, this protein is involved in the repair of mismatches in DNA. It is required for dam-dependent methyl-directed DNA mismatch repair. May act as a 'molecular matchmaker', a protein that promotes the formation of a stable complex between two or more DNA-binding proteins in an ATP-dependent manner without itself being part of a final effector complex. The sequence is that of DNA mismatch repair protein MutL from Endomicrobium trichonymphae.